Reading from the N-terminus, the 165-residue chain is RNA pyrophosphohydrolase (165 aa).

The Nudix hydrolase domain maps to Gly6–Thr149. The short motif at Gly38–Gly59 is the Nudix box element.

It belongs to the Nudix hydrolase family. RppH subfamily. The cofactor is a divalent metal cation.

Functionally, accelerates the degradation of transcripts by removing pyrophosphate from the 5'-end of triphosphorylated RNA, leading to a more labile monophosphorylated state that can stimulate subsequent ribonuclease cleavage. In Hydrogenovibrio crunogenus (strain DSM 25203 / XCL-2) (Thiomicrospira crunogena), this protein is RNA pyrophosphohydrolase.